The following is a 142-amino-acid chain: uncharacterized protein (142 aa).

2 helical membrane-spanning segments follow: residues 75-97 (VFFRKISFFTPLYFLLLSPYIVA) and 107-124 (LSIVLPVAVLYFSAKLFY).

Its subcellular location is the cell membrane. This is an uncharacterized protein from Archaeoglobus fulgidus (strain ATCC 49558 / DSM 4304 / JCM 9628 / NBRC 100126 / VC-16).